A 98-amino-acid polypeptide reads, in one-letter code: Large ribosomal subunit protein eL21 (98 aa).

Positions 1–24 (MVKKAHSFRRKTRGKLSKHPRRRG) are enriched in basic residues. The interval 1-27 (MVKKAHSFRRKTRGKLSKHPRRRGLPP) is disordered.

Belongs to the eukaryotic ribosomal protein eL21 family.

The polypeptide is Large ribosomal subunit protein eL21 (Thermococcus gammatolerans (strain DSM 15229 / JCM 11827 / EJ3)).